The chain runs to 243 residues: UPF0173 metal-dependent hydrolase Caur_2542 (243 aa).

It belongs to the UPF0173 family.

The polypeptide is UPF0173 metal-dependent hydrolase Caur_2542 (Chloroflexus aurantiacus (strain ATCC 29366 / DSM 635 / J-10-fl)).